The chain runs to 505 residues: ATP synthase subunit alpha (505 aa).

170–177 (GDRQTGKT) serves as a coordination point for ATP.

Belongs to the ATPase alpha/beta chains family. In terms of assembly, F-type ATPases have 2 components, CF(1) - the catalytic core - and CF(0) - the membrane proton channel. CF(1) has five subunits: alpha(3), beta(3), gamma(1), delta(1), epsilon(1). CF(0) has four main subunits: a, b, b' and c.

It is found in the cellular thylakoid membrane. It carries out the reaction ATP + H2O + 4 H(+)(in) = ADP + phosphate + 5 H(+)(out). Produces ATP from ADP in the presence of a proton gradient across the membrane. The alpha chain is a regulatory subunit. The protein is ATP synthase subunit alpha of Cyanothece sp. (strain PCC 7425 / ATCC 29141).